The primary structure comprises 157 residues: Peptide methionine sulfoxide reductase MsrA (157 aa).

Cys10 is an active-site residue.

Belongs to the MsrA Met sulfoxide reductase family.

It carries out the reaction L-methionyl-[protein] + [thioredoxin]-disulfide + H2O = L-methionyl-(S)-S-oxide-[protein] + [thioredoxin]-dithiol. The enzyme catalyses [thioredoxin]-disulfide + L-methionine + H2O = L-methionine (S)-S-oxide + [thioredoxin]-dithiol. Functionally, has an important function as a repair enzyme for proteins that have been inactivated by oxidation. Catalyzes the reversible oxidation-reduction of methionine sulfoxide in proteins to methionine. This Clostridium botulinum (strain Hall / ATCC 3502 / NCTC 13319 / Type A) protein is Peptide methionine sulfoxide reductase MsrA.